Consider the following 457-residue polypeptide: ERV-H1 provirus ancestral Env polyprotein (457 aa).

Positions 1 to 35 (MIFAGKAPSNTSTLMKFYSLILYSLLFSFPFLCHP) are cleaved as a signal peptide. N-linked (GlcNAc...) asparagine glycosylation is found at Asn10 and Asn47. The CXXC signature appears at 64–67 (CWLC). Asn197, Asn222, Asn265, Asn283, Asn352, and Asn370 each carry an N-linked (GlcNAc...) asparagine glycan. Residues 388–408 (VIPLIPLMFGLGLSASTIALS) are fusion peptide.

This sequence belongs to the gamma type-C retroviral envelope protein family. HERV class-I H env subfamily. The surface (SU) and transmembrane (TM) proteins form a heterodimer. SU and TM are attached by noncovalent interactions or by a labile interchain disulfide bond. Post-translationally, specific enzymatic cleavages in vivo yield the mature SU and TM proteins. In terms of processing, the CXXC motif is highly conserved across a broad range of retroviral envelope proteins. It is thought to participate in the formation of a labile disulfide bond possibly with the CX6CC motif present in the transmembrane protein.

It is found in the virion. In terms of biological role, retroviral envelope proteins mediate receptor recognition and membrane fusion during early infection. Endogenous envelope proteins may have kept, lost or modified their original function during evolution. Its function is as follows. SU mediates receptor recognition. Functionally, TM anchors the envelope heterodimer to the viral membrane through one transmembrane domain. The other hydrophobic domain, called fusion peptide, mediates fusion of the viral membrane with the target cell membrane. The protein is ERV-H1 provirus ancestral Env polyprotein of Pan troglodytes (Chimpanzee).